We begin with the raw amino-acid sequence, 375 residues long: Queuine tRNA-ribosyltransferase (375 aa).

Asp93 serves as the catalytic Proton acceptor. Substrate contacts are provided by residues 93-97 (DSGGY), Asp147, Gln194, and Gly221. The tract at residues 252-258 (GVGKPDD) is RNA binding. Residue Asp271 is the Nucleophile of the active site. Residues 276 to 280 (TRSGR) are RNA binding; important for wobble base 34 recognition. Positions 309, 311, 314, and 340 each coordinate Zn(2+).

The protein belongs to the queuine tRNA-ribosyltransferase family. As to quaternary structure, homodimer. Within each dimer, one monomer is responsible for RNA recognition and catalysis, while the other monomer binds to the replacement base PreQ1. The cofactor is Zn(2+).

It catalyses the reaction 7-aminomethyl-7-carbaguanine + guanosine(34) in tRNA = 7-aminomethyl-7-carbaguanosine(34) in tRNA + guanine. It participates in tRNA modification; tRNA-queuosine biosynthesis. Catalyzes the base-exchange of a guanine (G) residue with the queuine precursor 7-aminomethyl-7-deazaguanine (PreQ1) at position 34 (anticodon wobble position) in tRNAs with GU(N) anticodons (tRNA-Asp, -Asn, -His and -Tyr). Catalysis occurs through a double-displacement mechanism. The nucleophile active site attacks the C1' of nucleotide 34 to detach the guanine base from the RNA, forming a covalent enzyme-RNA intermediate. The proton acceptor active site deprotonates the incoming PreQ1, allowing a nucleophilic attack on the C1' of the ribose to form the product. After dissociation, two additional enzymatic reactions on the tRNA convert PreQ1 to queuine (Q), resulting in the hypermodified nucleoside queuosine (7-(((4,5-cis-dihydroxy-2-cyclopenten-1-yl)amino)methyl)-7-deazaguanosine). The protein is Queuine tRNA-ribosyltransferase of Sphingopyxis alaskensis (strain DSM 13593 / LMG 18877 / RB2256) (Sphingomonas alaskensis).